The chain runs to 121 residues: Large ribosomal subunit protein uL18 (121 aa).

The tract at residues 63 to 88 (AAIRPDPSPKKSQKQPPKTHKRYNLK) is disordered. Over residues 73-87 (KSQKQPPKTHKRYNL) the composition is skewed to basic residues.

Belongs to the universal ribosomal protein uL18 family. Component of the large ribosomal subunit (LSU).

The protein resides in the cytoplasm. It is found in the nucleus. Component of the ribosome, a large ribonucleoprotein complex responsible for the synthesis of proteins in the cell. The small ribosomal subunit (SSU) binds messenger RNAs (mRNAs) and translates the encoded message by selecting cognate aminoacyl-transfer RNA (tRNA) molecules. The large subunit (LSU) contains the ribosomal catalytic site termed the peptidyl transferase center (PTC), which catalyzes the formation of peptide bonds, thereby polymerizing the amino acids delivered by tRNAs into a polypeptide chain. The nascent polypeptides leave the ribosome through a tunnel in the LSU and interact with protein factors that function in enzymatic processing, targeting, and the membrane insertion of nascent chains at the exit of the ribosomal tunnel. This Solanum melongena (Eggplant) protein is Large ribosomal subunit protein uL18 (RPL5).